A 418-amino-acid chain; its full sequence is Serine hydroxymethyltransferase (418 aa).

(6S)-5,6,7,8-tetrahydrofolate contacts are provided by residues Leu-121 and 125–127 (GHL). Residue Lys-230 is modified to N6-(pyridoxal phosphate)lysine. 356–358 (SPF) contributes to the (6S)-5,6,7,8-tetrahydrofolate binding site.

Belongs to the SHMT family. In terms of assembly, homodimer. Pyridoxal 5'-phosphate is required as a cofactor.

It is found in the cytoplasm. The catalysed reaction is (6R)-5,10-methylene-5,6,7,8-tetrahydrofolate + glycine + H2O = (6S)-5,6,7,8-tetrahydrofolate + L-serine. Its pathway is one-carbon metabolism; tetrahydrofolate interconversion. It functions in the pathway amino-acid biosynthesis; glycine biosynthesis; glycine from L-serine: step 1/1. Its function is as follows. Catalyzes the reversible interconversion of serine and glycine with tetrahydrofolate (THF) serving as the one-carbon carrier. This reaction serves as the major source of one-carbon groups required for the biosynthesis of purines, thymidylate, methionine, and other important biomolecules. Also exhibits THF-independent aldolase activity toward beta-hydroxyamino acids, producing glycine and aldehydes, via a retro-aldol mechanism. This Shewanella pealeana (strain ATCC 700345 / ANG-SQ1) protein is Serine hydroxymethyltransferase.